Consider the following 347-residue polypeptide: Protein RecA (347 aa).

ATP is bound at residue 67 to 74 (GPESSGKT).

The protein belongs to the RecA family.

It localises to the cytoplasm. Functionally, can catalyze the hydrolysis of ATP in the presence of single-stranded DNA, the ATP-dependent uptake of single-stranded DNA by duplex DNA, and the ATP-dependent hybridization of homologous single-stranded DNAs. It interacts with LexA causing its activation and leading to its autocatalytic cleavage. The protein is Protein RecA of Helicobacter pylori (strain Shi470).